Reading from the N-terminus, the 330-residue chain is Phosphate acyltransferase (330 aa).

It belongs to the PlsX family. In terms of assembly, homodimer. Probably interacts with PlsY.

The protein localises to the cytoplasm. The enzyme catalyses a fatty acyl-[ACP] + phosphate = an acyl phosphate + holo-[ACP]. Its pathway is lipid metabolism; phospholipid metabolism. Catalyzes the reversible formation of acyl-phosphate (acyl-PO(4)) from acyl-[acyl-carrier-protein] (acyl-ACP). This enzyme utilizes acyl-ACP as fatty acyl donor, but not acyl-CoA. The chain is Phosphate acyltransferase from Lactobacillus delbrueckii subsp. bulgaricus (strain ATCC 11842 / DSM 20081 / BCRC 10696 / JCM 1002 / NBRC 13953 / NCIMB 11778 / NCTC 12712 / WDCM 00102 / Lb 14).